A 211-amino-acid polypeptide reads, in one-letter code: MSKVLFIKASPLPNEVSRSSQVAETFMAEYKAKNPSDTVEELVLYNTEVPLLDLELMTAGRELQAGKAFTDLAPDVQKKLNAYNALTEQFLAADKYVFVFPLWNLGIPPLLKAYIDTFVIAGKSFRYTEHGPEALLKDKKAILIHGSGGIYSAGPTSSFTHGEPYLRTILQFIGINVVPSIFVEGIDHNPSKEAEIVAAAKAVAQESATEF.

FMN is bound by residues Ser10 and 17 to 19 (SRS).

The protein belongs to the azoreductase type 1 family. As to quaternary structure, homodimer. FMN serves as cofactor.

It catalyses the reaction 2 a quinone + NADH + H(+) = 2 a 1,4-benzosemiquinone + NAD(+). The enzyme catalyses N,N-dimethyl-1,4-phenylenediamine + anthranilate + 2 NAD(+) = 2-(4-dimethylaminophenyl)diazenylbenzoate + 2 NADH + 2 H(+). In terms of biological role, quinone reductase that provides resistance to thiol-specific stress caused by electrophilic quinones. Its function is as follows. Also exhibits azoreductase activity. Catalyzes the reductive cleavage of the azo bond in aromatic azo compounds to the corresponding amines. The sequence is that of FMN-dependent NADH:quinone oxidoreductase 2 from Listeria monocytogenes serovar 1/2a (strain ATCC BAA-679 / EGD-e).